The chain runs to 387 residues: Exodeoxyribonuclease 7 large subunit (387 aa).

It belongs to the XseA family. Heterooligomer composed of large and small subunits.

The protein resides in the cytoplasm. The enzyme catalyses Exonucleolytic cleavage in either 5'- to 3'- or 3'- to 5'-direction to yield nucleoside 5'-phosphates.. Functionally, bidirectionally degrades single-stranded DNA into large acid-insoluble oligonucleotides, which are then degraded further into small acid-soluble oligonucleotides. The sequence is that of Exodeoxyribonuclease 7 large subunit from Campylobacter hominis (strain ATCC BAA-381 / DSM 21671 / CCUG 45161 / LMG 19568 / NCTC 13146 / CH001A).